The chain runs to 215 residues: Cytochrome b6 (215 aa).

Residues 32–52 (IFYCLGGITLTCFLVQVATGF) form a helical membrane-spanning segment. Position 35 (Cys-35) interacts with heme c. Heme b-binding residues include His-86 and His-100. The next 3 membrane-spanning stretches (helical) occupy residues 90–110 (ASMM…TGGF), 116–136 (LTWI…VTGY), and 186–206 (LHTF…FLMI). Heme b contacts are provided by His-187 and His-202.

This sequence belongs to the cytochrome b family. PetB subfamily. In terms of assembly, the 4 large subunits of the cytochrome b6-f complex are cytochrome b6, subunit IV (17 kDa polypeptide, PetD), cytochrome f and the Rieske protein, while the 4 small subunits are PetG, PetL, PetM and PetN. The complex functions as a dimer. Heme b is required as a cofactor. Requires heme c as cofactor.

The protein resides in the plastid. It localises to the chloroplast thylakoid membrane. Its function is as follows. Component of the cytochrome b6-f complex, which mediates electron transfer between photosystem II (PSII) and photosystem I (PSI), cyclic electron flow around PSI, and state transitions. The chain is Cytochrome b6 from Psilotum nudum (Whisk fern).